The following is a 276-amino-acid chain: 3-methyl-2-oxobutanoate hydroxymethyltransferase (276 aa).

Positions 44 and 83 each coordinate Mg(2+). Residues 44 to 45, D83, and K112 contribute to the 3-methyl-2-oxobutanoate site; that span reads DS. Position 114 (E114) interacts with Mg(2+). The active-site Proton acceptor is E180. Residues 256–276 form a disordered region; the sequence is PTEAQSSRMKPDELSRALNAE.

This sequence belongs to the PanB family. As to quaternary structure, homodecamer; pentamer of dimers. Requires Mg(2+) as cofactor.

The protein resides in the cytoplasm. It carries out the reaction 3-methyl-2-oxobutanoate + (6R)-5,10-methylene-5,6,7,8-tetrahydrofolate + H2O = 2-dehydropantoate + (6S)-5,6,7,8-tetrahydrofolate. Its pathway is cofactor biosynthesis; (R)-pantothenate biosynthesis; (R)-pantoate from 3-methyl-2-oxobutanoate: step 1/2. In terms of biological role, catalyzes the reversible reaction in which hydroxymethyl group from 5,10-methylenetetrahydrofolate is transferred onto alpha-ketoisovalerate to form ketopantoate. The protein is 3-methyl-2-oxobutanoate hydroxymethyltransferase of Gluconacetobacter diazotrophicus (strain ATCC 49037 / DSM 5601 / CCUG 37298 / CIP 103539 / LMG 7603 / PAl5).